The chain runs to 871 residues: Patatin-like phospholipase domain-containing protein CNBE2340 (871 aa).

Positions 20–53 are disordered; the sequence is NEDSPLSPRSFSLPPESPQLSTASPIHQRVSRKR. The span at 23-33 shows a compositional bias: low complexity; it reads SPLSPRSFSLP. Residues 68–88 form a helical membrane-spanning segment; sequence WPLLFFIFFIIYLEFSAYVIT. The 193-residue stretch at 243-435 folds into the PNPLA domain; the sequence is LCLSGGASFG…REDIPLGSLH (193 aa). Residues 274 to 278 carry the GXSXG motif; it reads GTSAG. The Nucleophile role is filled by Ser-276. Asp-422 serves as the catalytic Proton acceptor. Disordered regions lie at residues 586–707, 720–748, and 760–871; these read ALSH…NFGD, LSSP…QRFR, and VSES…QDGA. Composition is skewed to polar residues over residues 594-606 and 687-706; these read NDPA…TNPE and PTHS…SNFG. A compositionally biased stretch (low complexity) spans 721–748; sequence SSPFRSIRSNTSSSSNNVQSPSSSQRFR. Residues 798–820 show a composition bias toward basic and acidic residues; that stretch reads VESHSDRSEDEMLHSGANVKEEY.

Belongs to the PLPL family.

It is found in the membrane. Its function is as follows. Probable lipid hydrolase. The polypeptide is Patatin-like phospholipase domain-containing protein CNBE2340 (Cryptococcus neoformans var. neoformans serotype D (strain B-3501A) (Filobasidiella neoformans)).